A 203-amino-acid chain; its full sequence is Enterotoxin-like toxin X (203 aa).

The interval 164 to 180 (YTLESHKELQKNRENVE) is sialic acid-binding motif.

This sequence belongs to the staphylococcal/streptococcal toxin family.

The protein localises to the secreted. Plays a role in the inhibition of the host innate immune system. Inhibits phagocytosis and killing by human neutrophils by interacting with multiple neutrophil surface glycoproteins in a sialic acid-dependent manner. The sequence is that of Enterotoxin-like toxin X from Staphylococcus aureus.